A 91-amino-acid polypeptide reads, in one-letter code: Probable Fe(2+)-trafficking protein (91 aa).

It belongs to the Fe(2+)-trafficking protein family.

Could be a mediator in iron transactions between iron acquisition and iron-requiring processes, such as synthesis and/or repair of Fe-S clusters in biosynthetic enzymes. The chain is Probable Fe(2+)-trafficking protein from Ralstonia nicotianae (strain ATCC BAA-1114 / GMI1000) (Ralstonia solanacearum).